The primary structure comprises 1532 residues: Multidrug resistance-associated protein 1 (1532 aa).

Residues 1-33 are Extracellular-facing; the sequence is MALSSFCSSDGSDPLWDWNVTWHTSNPDFTKCF. N-linked (GlcNAc...) asparagine glycosylation is present at Asn-19. The helical transmembrane segment at 34-54 threads the bilayer; it reads QNTVLTWVPCFYLWSCFPLYF. Residues 55–74 lie on the Cytoplasmic side of the membrane; that stretch reads LYLSRHDRGYIQMTHLNKAK. A helical membrane pass occupies residues 75-95; that stretch reads TALGFFLWIICWADLFYSFWE. The Extracellular segment spans residues 96–100; sequence RSQGM. A helical membrane pass occupies residues 101–121; it reads LLAPVLLVSPTLLGITMLLAT. The Cytoplasmic segment spans residues 122–133; sequence FLIQFERRKGVQ. Residues 134–154 traverse the membrane as a helical segment; it reads SSGIMLTFWLVALLCALAILR. Residues 155-172 are Extracellular-facing; the sequence is SKIISALKKDAQVDMFRD. A helical membrane pass occupies residues 173 to 193; that stretch reads SAFYLYFTLVFIQLVLSCFSD. Residues 194–317 lie on the Cytoplasmic side of the membrane; it reads SSPLFSETVR…KDRDPSLFKV (124 aa). Tyr-277 carries the post-translational modification Phosphotyrosine. Phosphoserine is present on Ser-290. A helical transmembrane segment spans residues 318-338; that stretch reads LYKTFGPYFLMSFLYKALHDL. An ABC transmembrane type-1 1 domain is found at 326 to 609; the sequence is FLMSFLYKAL…LPMVISSIVQ (284 aa). The Extracellular portion of the chain corresponds to 339–364; it reads MMFAGPEILELIINFVNDREAPDWQG. A helical transmembrane segment spans residues 365 to 385; that stretch reads YLYTALLFVSACLQTLALHQY. At 386 to 441 the chain is on the cytoplasmic side; sequence FHICFVTGMRIKTAVVGAVYRKALVITNSARKSSTVGEIVNLMSVDAQRFMDLATY. The helical transmembrane segment at 442-462 threads the bilayer; it reads INMIWSAPLQVTLALYFLWLN. The Extracellular segment spans residues 463–465; that stretch reads LGP. The chain crosses the membrane as a helical span at residues 466-486; the sequence is SVLAGVAVMILMVPFNAVMAM. Topologically, residues 487 to 548 are cytoplasmic; that stretch reads KTKTYQVAHM…VLKKSAYLAA (62 aa). Residue Lys-504 is modified to N6-succinyllysine. A helical membrane pass occupies residues 549 to 569; sequence VGTFTWVCTPFLVALSTFAVF. Over 570–591 the chain is Extracellular; that stretch reads VTVDEKNILDAKKAFVSLALFN. The helical transmembrane segment at 592 to 612 threads the bilayer; sequence ILRFPLNILPMVISSIVQASV. At 613 to 967 the chain is on the cytoplasmic side; sequence SLKRLRIFLS…VKLSVYWNYM (355 aa). The 225-residue stretch at 645–869 folds into the ABC transporter 1 domain; the sequence is ITVKNATFTW…DGAFAEFVRT (225 aa). Residue 679 to 686 coordinates ATP; sequence GQVGCGKS. Residues Ser-879, Ser-883, Ser-916, and Ser-931 each carry the phosphoserine modification. A helical membrane pass occupies residues 968–988; that stretch reads KAIGLCISFLSIFLFLCNHVS. Residues 975-1257 enclose the ABC transmembrane type-1 2 domain; it reads SFLSIFLFLC…LVRMSSEMET (283 aa). Topologically, residues 989-1026 are extracellular; the sequence is ALASNYWLSLWTDDRPAVNGTQENRNFRLSVYGALGIL. A helical transmembrane segment spans residues 1027-1047; that stretch reads QGVAVFGYSMAVSIGGIFASR. Residues 1048 to 1090 lie on the Cytoplasmic side of the membrane; that stretch reads RLHLDLLQNVLRSPMSFFERTPSGNLVNRFSKELDTVDSMIPQ. The chain crosses the membrane as a helical span at residues 1091 to 1111; sequence VIKMFMGSLFSVIGAVIIILL. A topological domain (extracellular) is located at residue Ala-1112. Residues 1113–1133 form a helical membrane-spanning segment; it reads TPIAAVIIPPLGLVYFFVQRF. At 1134 to 1204 the chain is on the cytoplasmic side; it reads YVASSRQLKR…VANRWLAVRL (71 aa). Residues 1205–1225 traverse the membrane as a helical segment; it reads ECVGNCIVLFAALFAVISRHS. Residues 1226–1227 lie on the Extracellular side of the membrane; it reads LS. A helical membrane pass occupies residues 1228-1248; that stretch reads AGLVGLSVSYSLQITAYLNWL. Topologically, residues 1249–1532 are cytoplasmic; it reads VRMSSEMETN…YSMAKDAGLV (284 aa). The ABC transporter 2 domain maps to 1294–1528; that stretch reads VEFRDYCLRY…RGVFYSMAKD (235 aa). Position 1328-1335 (1328-1335) interacts with ATP; the sequence is GRTGAGKS.

The protein belongs to the ABC transporter superfamily. ABCC family. Conjugate transporter (TC 3.A.1.208) subfamily. In terms of processing, glycosylated. In terms of tissue distribution, skeletal muscle, brain, heart, spleen, lung and kidney.

The protein resides in the cell membrane. It localises to the basolateral cell membrane. The catalysed reaction is ATP + H2O + xenobioticSide 1 = ADP + phosphate + xenobioticSide 2.. The enzyme catalyses an S-substituted glutathione(in) + ATP + H2O = an S-substituted glutathione(out) + ADP + phosphate + H(+). It carries out the reaction sphing-4-enine 1-phosphate(in) + ATP + H2O = sphing-4-enine 1-phosphate(out) + ADP + phosphate + H(+). It catalyses the reaction leukotriene C4(in) + ATP + H2O = leukotriene C4(out) + ADP + phosphate + H(+). The catalysed reaction is 17beta-estradiol 17-O-(beta-D-glucuronate)(in) + ATP + H2O = 17beta-estradiol 17-O-(beta-D-glucuronate)(out) + ADP + phosphate + H(+). The enzyme catalyses daunorubicin(in) + ATP + H2O = daunorubicin(out) + ADP + phosphate + H(+). It carries out the reaction vincristine(in) + ATP + H2O = vincristine(out) + ADP + phosphate + H(+). It catalyses the reaction 2',3'-cGAMP(in) + ATP + H2O = 2',3'-cGAMP(out) + ADP + phosphate + H(+). The catalysed reaction is S-[(2E,6E,10E)-geranylgeranyl]-L-glutathione(in) + ATP + H2O = S-[(2E,6E,10E)-geranylgeranyl]-L-glutathione(out) + ADP + phosphate + H(+). The enzyme catalyses prostaglandin A2-S-(R)-glutathione(in) + ATP + H2O = prostaglandin A2-S-(R)-glutathione(out) + ADP + phosphate + H(+). It carries out the reaction prostaglandin A2-S-(S)-glutathione(in) + ATP + H2O = prostaglandin A2-S-(S)-glutathione(out) + ADP + phosphate + H(+). MK 571 inhibits sphingosine 1-phosphate and leukotriene C4 export. Functionally, mediates export of organic anions and drugs from the cytoplasm. Mediates ATP-dependent transport of glutathione and glutathione conjugates, leukotriene C4, estradiol-17-beta-o-glucuronide, methotrexate, antiviral drugs and other xenobiotics. Confers resistance to anticancer drugs by decreasing accumulation of drug in cells, and by mediating ATP- and GSH-dependent drug export. Hydrolyzes ATP with low efficiency. Catalyzes the export of sphingosine 1-phosphate from mast cells independently of their degranulation. Participates in inflammatory response by allowing export of leukotriene C4 from leukotriene C4-synthesizing cells. Exports S-geranylgeranyl-glutathione (GGG) in lymphoid cells and stromal compartments of lymphoid organs. ABCC1 (via extracellular transport) with GGT5 (via GGG catabolism) establish GGG gradients within lymphoid tissues to position P2RY8-positive lymphocytes at germinal centers in lymphoid follicles and restrict their chemotactic transmigration from blood vessels to the bone marrow parenchyma. Mediates basolateral export of GSH-conjugated R- and S-prostaglandin A2 diastereomers in polarized epithelial cells. In Rattus norvegicus (Rat), this protein is Multidrug resistance-associated protein 1.